Here is a 117-residue protein sequence, read N- to C-terminus: Iron-sulfur cluster insertion protein ErpA (117 aa).

Residues Cys45, Cys109, and Cys111 each contribute to the iron-sulfur cluster site.

It belongs to the HesB/IscA family. As to quaternary structure, homodimer. Iron-sulfur cluster is required as a cofactor.

Required for insertion of 4Fe-4S clusters for at least IspG. The chain is Iron-sulfur cluster insertion protein ErpA from Chromohalobacter salexigens (strain ATCC BAA-138 / DSM 3043 / CIP 106854 / NCIMB 13768 / 1H11).